The following is a 607-amino-acid chain: Transporter aclS (607 aa).

12 consecutive transmembrane segments (helical) span residues 67–87 (LGGS…AVVL), 91–111 (IAAI…IGFP), 152–172 (LTVV…TAIL), 192–212 (VTTQ…PVLY), 221–241 (LMIG…IWSL), 262–282 (SLGF…SIAL), 317–337 (VFGQ…FGCL), 364–384 (AAAV…NVVD), 423–443 (GCYV…LASA), 445–465 (TFVS…GIHI), 500–520 (GVLP…HSIN), and 531–551 (HLYA…HTLV). Residues 583–607 (NKDSTEEDSDRSLRRESREVVETKV) form a disordered region. Residues 592 to 607 (DRSLRRESREVVETKV) show a composition bias toward basic and acidic residues.

The protein belongs to the purine-cytosine permease (2.A.39) family.

The protein localises to the membrane. Functionally, transporter; part of the gene cluster that mediates the biosynthesis of aspirochlorine (or antibiotic A30641), an unusual halogenated spiro compound with distinctive antifungal properties due to selective inhibition of protein biosynthesis, and which is also active against bacteria, viruses, and murine tumor cells. The chain is Transporter aclS from Aspergillus oryzae (strain ATCC 42149 / RIB 40) (Yellow koji mold).